The sequence spans 627 residues: (R)-linalool synthase 1, chloroplastic (627 aa).

A chloroplast-targeting transit peptide spans 1–21; it reads MAFVSIAPLASRCCVHKSFVS. Mg(2+)-binding residues include Asp-378, Asp-382, and Glu-530. Positions 378–382 match the DDXXD motif motif; sequence DDIYD.

This sequence belongs to the terpene synthase family. Tpsd subfamily. Mg(2+) is required as a cofactor. It depends on Mn(2+) as a cofactor.

It is found in the plastid. Its subcellular location is the chloroplast. It catalyses the reaction (2E)-geranyl diphosphate + H2O = (R)-linalool + diphosphate. It participates in terpene metabolism; oleoresin biosynthesis. Functionally, terpene synthase (TPS) involved in the biosynthesis of monoterpene natural products included in conifer oleoresin secretions and volatile emissions; these compounds contribute to biotic and abiotic stress defense against herbivores and pathogens. Catalyzes the conversion of (2E)-geranyl diphosphate (GPP) to (R)-linalool. This Picea sitchensis (Sitka spruce) protein is (R)-linalool synthase 1, chloroplastic.